A 317-amino-acid polypeptide reads, in one-letter code: 2,3-dihydroxyphenylpropionate/2,3-dihydroxicinnamic acid 1,2-dioxygenase (317 aa).

Catalysis depends on His115, which acts as the Proton donor. The Proton acceptor role is filled by His179.

It belongs to the LigB/MhpB extradiol dioxygenase family. In terms of assembly, homotetramer. Fe(2+) is required as a cofactor.

The catalysed reaction is 3-(2,3-dihydroxyphenyl)propanoate + O2 = (2Z,4E)-2-hydroxy-6-oxonona-2,4-dienedioate + H(+). It catalyses the reaction (2E)-3-(2,3-dihydroxyphenyl)prop-2-enoate + O2 = (2Z,4E,7E)-2-hydroxy-6-oxonona-2,4,7-trienedioate + H(+). The protein operates within aromatic compound metabolism; 3-phenylpropanoate degradation. Functionally, catalyzes the non-heme iron(II)-dependent oxidative cleavage of 2,3-dihydroxyphenylpropionic acid and 2,3-dihydroxicinnamic acid into 2-hydroxy-6-ketononadienedioate and 2-hydroxy-6-ketononatrienedioate, respectively. In Burkholderia vietnamiensis (strain G4 / LMG 22486) (Burkholderia cepacia (strain R1808)), this protein is 2,3-dihydroxyphenylpropionate/2,3-dihydroxicinnamic acid 1,2-dioxygenase.